Consider the following 226-residue polypeptide: MGKISIAIDGPASSGKSTVAKILAKQLNYVYCDTGAMYRAITYLALQNQIDIQAEEPLVALCVNHTISFQQAENGQRVFIDGHEVTEAIRQPDVTNAVSAVSKHAKVREEMVALQQKIGQAGGVVMDGRDIGTAVLPKAEVKIFLVASVEERAERRFKENQEKGIETDFETLKAEIERRDYLDSTREVSPLVQASDAVKIDTTGLTIEEVVAAIQNVIKQKGFELF.

Position 10–18 (10–18) interacts with ATP; that stretch reads GPASSGKST.

It belongs to the cytidylate kinase family. Type 1 subfamily.

It localises to the cytoplasm. The enzyme catalyses CMP + ATP = CDP + ADP. The catalysed reaction is dCMP + ATP = dCDP + ADP. This Enterococcus faecalis (strain ATCC 700802 / V583) protein is Cytidylate kinase.